We begin with the raw amino-acid sequence, 700 residues long: Tectonic-2 (700 aa).

Residues 1–25 (MGSLSPLSFLWGLLLLQGVLRPLRG) form the signal peptide. Residues 26 to 665 (DPVFIPPFIR…YYQGEPRPQC (640 aa)) are Extracellular-facing. N-linked (GlcNAc...) asparagine glycans are attached at residues Asn76, Asn82, Asn146, Asn156, and Asn389. Residues 666-682 (VAKGLMLLSLLMLAILL) traverse the membrane as a helical segment. Topologically, residues 683–700 (RHPWVGMCKAWSSASIQH) are cytoplasmic.

The protein belongs to the tectonic family. Part of the tectonic-like complex (also named B9 complex).

It localises to the membrane. Its subcellular location is the cytoplasm. The protein resides in the cytoskeleton. The protein localises to the cilium basal body. Component of the tectonic-like complex, a complex localized at the transition zone of primary cilia and acting as a barrier that prevents diffusion of transmembrane proteins between the cilia and plasma membranes. Required for hedgehog signaling transduction. The protein is Tectonic-2 (Tctn2) of Rattus norvegicus (Rat).